The primary structure comprises 358 residues: NADH-quinone oxidoreductase subunit H (358 aa).

Helical transmembrane passes span 30–50 (IAVG…LIYM), 96–116 (FLYN…FACI), 129–149 (VGVF…LLAG), 168–188 (IISY…LMGT), 201–221 (GWFI…YLIA), 265–285 (FIVA…LHII), 297–317 (IPGF…LMWI), and 336–356 (YLVP…AFGF).

This sequence belongs to the complex I subunit 1 family. In terms of assembly, NDH-1 is composed of 14 different subunits. Subunits NuoA, H, J, K, L, M, N constitute the membrane sector of the complex.

The protein resides in the cell inner membrane. The enzyme catalyses a quinone + NADH + 5 H(+)(in) = a quinol + NAD(+) + 4 H(+)(out). Its function is as follows. NDH-1 shuttles electrons from NADH, via FMN and iron-sulfur (Fe-S) centers, to quinones in the respiratory chain. The immediate electron acceptor for the enzyme in this species is believed to be ubiquinone. Couples the redox reaction to proton translocation (for every two electrons transferred, four hydrogen ions are translocated across the cytoplasmic membrane), and thus conserves the redox energy in a proton gradient. This subunit may bind ubiquinone. The sequence is that of NADH-quinone oxidoreductase subunit H from Bacteroides thetaiotaomicron (strain ATCC 29148 / DSM 2079 / JCM 5827 / CCUG 10774 / NCTC 10582 / VPI-5482 / E50).